We begin with the raw amino-acid sequence, 296 residues long: GTPase Era (296 aa).

In terms of domain architecture, Era-type G spans 7–174 (HCGFVAIVGR…LDQVRPHLPE (168 aa)). The interval 15–22 (GRPNVGKS) is G1. 15-22 (GRPNVGKS) provides a ligand contact to GTP. Residues 41-45 (QTTRH) are G2. The segment at 62–65 (DTPG) is G3. GTP contacts are provided by residues 62-66 (DTPGF) and 123-126 (NKLD). The tract at residues 123–126 (NKLD) is G4. A G5 region spans residues 153-155 (VSA). Residues 205-281 (LGEELPYEMN…FLQVWVKVKS (77 aa)) enclose the KH type-2 domain.

Belongs to the TRAFAC class TrmE-Era-EngA-EngB-Septin-like GTPase superfamily. Era GTPase family. As to quaternary structure, monomer.

The protein resides in the cytoplasm. It is found in the cell inner membrane. Its function is as follows. An essential GTPase that binds both GDP and GTP, with rapid nucleotide exchange. Plays a role in 16S rRNA processing and 30S ribosomal subunit biogenesis and possibly also in cell cycle regulation and energy metabolism. The polypeptide is GTPase Era (Chromobacterium violaceum (strain ATCC 12472 / DSM 30191 / JCM 1249 / CCUG 213 / NBRC 12614 / NCIMB 9131 / NCTC 9757 / MK)).